The sequence spans 599 residues: Pentatricopeptide repeat-containing protein At3g62470, mitochondrial (599 aa).

The N-terminal 99 residues, 1 to 99, are a transit peptide targeting the mitochondrion; that stretch reads MAAAPWLHLS…RGFSSGSSNV (99 aa). PPR repeat units lie at residues 194–228, 230–262, 263–293, 297–331, 332–366, 367–401, 402–436, 437–471, 472–506, and 507–541; these read DSRTYNSMMSILAKTRQFETMVSVLEEMGTKGLLT, ETFTIAMKAFAAAKERKKAVGIFELMKKYKFKI, GVETINCLLDSLGRAKLGKEAQVLFDKLKER, NMMTYTVLLNGWCRVRNLIEAARIWNDMIDQGLKP, DIVAHNVMLEGLLRSRKKSDAIKLFHVMKSKGPCP, NVRSYTIMIRDFCKQSSMETAIEYFDDMVDSGLQP, DAAVYTCLITGFGTQKKLDTVYELLKEMQEKGHPP, DGKTYNALIKLMANQKMPEHATRIYNKMIQNEIEP, SIHTFNMIMKSYFMARNYEMGRAVWEEMIKKGICP, and DDNSYTVLIRGLIGEGKSREACRYLEEMLDKGMKT.

The protein belongs to the PPR family. P subfamily.

It localises to the mitochondrion. The chain is Pentatricopeptide repeat-containing protein At3g62470, mitochondrial from Arabidopsis thaliana (Mouse-ear cress).